Here is a 245-residue protein sequence, read N- to C-terminus: 2,3-bisphosphoglycerate-dependent phosphoglycerate mutase (245 aa).

Residues Arg8–Asn15, Thr21–Gly22, Arg60, Glu87–Tyr90, Lys98, Arg114–Arg115, and Gly183–Asn184 contribute to the substrate site. The Tele-phosphohistidine intermediate role is filled by His9. The active-site Proton donor/acceptor is Glu87.

Belongs to the phosphoglycerate mutase family. BPG-dependent PGAM subfamily.

The catalysed reaction is (2R)-2-phosphoglycerate = (2R)-3-phosphoglycerate. It functions in the pathway carbohydrate degradation; glycolysis; pyruvate from D-glyceraldehyde 3-phosphate: step 3/5. Functionally, catalyzes the interconversion of 2-phosphoglycerate and 3-phosphoglycerate. This chain is 2,3-bisphosphoglycerate-dependent phosphoglycerate mutase, found in Bacillus cereus (strain ATCC 14579 / DSM 31 / CCUG 7414 / JCM 2152 / NBRC 15305 / NCIMB 9373 / NCTC 2599 / NRRL B-3711).